A 184-amino-acid chain; its full sequence is GTP-binding protein Rheb (184 aa).

Residue lysine 8 forms a Glycyl lysine isopeptide (Lys-Gly) (interchain with G-Cter in ubiquitin) linkage. Residues serine 16 and valine 17 each contribute to the GDP site. Serine 16 lines the GTP pocket. 9 residues coordinate GTP: glycine 18, lysine 19, serine 20, serine 21, valine 32, tyrosine 35, threonine 38, asparagine 119, and aspartate 122. GDP is bound by residues lysine 19, serine 20, and serine 21. Serine 20 contributes to the Mg(2+) binding site. The short motif at 35–43 (YDPTIENTF) is the Effector region element. Threonine 38 is a GDP binding site. Threonine 38 contacts Mg(2+). A GDP-binding site is contributed by aspartate 122. At serine 130 the chain carries Phosphoserine; by MAPKAPK5. Alanine 150 provides a ligand contact to GDP. Alanine 150 serves as a coordination point for GTP. A Cysteine methyl ester modification is found at cysteine 181. The S-farnesyl cysteine moiety is linked to residue cysteine 181. Residues 182–184 (SVM) constitute a propeptide, removed in mature form.

Belongs to the small GTPase superfamily. Rheb family. Associates with the mTORC1 complex (MTOR, MLST8 and RPTOR) in a guanyl nucleotide-independent manner. Interacts with TSC2. Interacts with MCRS1; the interaction maintains RHEB at the lysosome in its active GTP-bound form and prevents its interaction with the mTORC1 complex inhibitor TSC2, ensuring activation of the mTORC1 complex by RHEB. Interacts (when prenylated) with PDE6D; this promotes release from membranes. Post-translationally, farnesylation is important for efficiently activating mTORC1-mediated signaling. Polyubiquitinated in response to amino acid, promoting its interaction with MTOR and mTORC1 activation. Deubiquitination by ATXN3 promotes recruitment of the TSC-TBC complex and RHEB inactivation by TSC2. Monoubiquitinated at Lys-8 by RNF152, promoting its association with the TSC-TBC complex. Deubiquitinated at Lys-8 by USP4, promoting mTORC1 activation. In terms of processing, phosphorylation by MAPKAPK5 impairs GTP-binding and inactivation. In terms of tissue distribution, expressed at high levels in normal adult cortex as well as a number of peripheral tissues, including lung and intestine.

Its subcellular location is the endomembrane system. It localises to the lysosome membrane. It is found in the golgi apparatus membrane. The protein resides in the endoplasmic reticulum membrane. The protein localises to the cytoplasm. Its subcellular location is the cytosol. It carries out the reaction GTP + H2O = GDP + phosphate + H(+). With respect to regulation, alternates between an inactive form bound to GDP and an active form bound to GTP. Inactivated by the TSC-TBC complex via the GTPase activating protein (GAP) domain of TSC2. Autoinhibited by Tyr-35, which constrains the active site conformation, restricting the access of the catalytic Asp-65 to the nucleotide-binding pocket. Small GTPase that acts as an allosteric activator of the canonical mTORC1 complex, an evolutionarily conserved central nutrient sensor that stimulates anabolic reactions and macromolecule biosynthesis to promote cellular biomass generation and growth. In response to nutrients, growth factors or amino acids, specifically activates the protein kinase activity of MTOR, the catalytic component of the mTORC1 complex: acts by causing a conformational change that allows the alignment of residues in the active site of MTOR, thereby enhancing the phosphorylation of ribosomal protein S6 kinase (RPS6KB1 and RPS6KB2) and EIF4EBP1 (4E-BP1). RHEB is also required for localization of the TSC-TBC complex to lysosomal membranes. In response to starvation, RHEB is inactivated by the TSC-TBC complex, preventing activation of mTORC1. Has low intrinsic GTPase activity. In Rattus norvegicus (Rat), this protein is GTP-binding protein Rheb.